The sequence spans 396 residues: Flavohemoprotein (396 aa).

One can recognise a Globin domain in the interval 1–136; the sequence is MLDNHTIAIV…LANVFIQRED (136 aa). H85 is a binding site for heme b. Catalysis depends on charge relay system residues Y95 and E135. Positions 147–396 are reductase; the sequence is GGWSGVRPFR…YECFGPHKVV (250 aa). The region spanning 150–255 is the FAD-binding FR-type domain; that stretch reads SGVRPFRIVN…AAPHGDFFLD (106 aa). Residues Y188 and 204 to 207 contribute to the FAD site; that span reads RQYS. NADP(+) is bound at residue 268–273; the sequence is GVGQTP. 389–392 provides a ligand contact to FAD; that stretch reads CFGP.

Belongs to the globin family. Two-domain flavohemoproteins subfamily. This sequence in the C-terminal section; belongs to the flavoprotein pyridine nucleotide cytochrome reductase family. Heme b is required as a cofactor. The cofactor is FAD.

The enzyme catalyses 2 nitric oxide + NADPH + 2 O2 = 2 nitrate + NADP(+) + H(+). It carries out the reaction 2 nitric oxide + NADH + 2 O2 = 2 nitrate + NAD(+) + H(+). In terms of biological role, is involved in NO detoxification in an aerobic process, termed nitric oxide dioxygenase (NOD) reaction that utilizes O(2) and NAD(P)H to convert NO to nitrate, which protects the bacterium from various noxious nitrogen compounds. Therefore, plays a central role in the inducible response to nitrosative stress. The protein is Flavohemoprotein of Pectobacterium atrosepticum (strain SCRI 1043 / ATCC BAA-672) (Erwinia carotovora subsp. atroseptica).